Here is a 504-residue protein sequence, read N- to C-terminus: ATP synthase subunit alpha (504 aa).

An ATP-binding site is contributed by 170–177 (GDRQTGKT).

This sequence belongs to the ATPase alpha/beta chains family. F-type ATPases have 2 components, CF(1) - the catalytic core - and CF(0) - the membrane proton channel. CF(1) has five subunits: alpha(3), beta(3), gamma(1), delta(1), epsilon(1). CF(0) has four main subunits: a(1), b(1), b'(1) and c(9-12).

Its subcellular location is the cellular thylakoid membrane. It carries out the reaction ATP + H2O + 4 H(+)(in) = ADP + phosphate + 5 H(+)(out). In terms of biological role, produces ATP from ADP in the presence of a proton gradient across the membrane. The alpha chain is a regulatory subunit. The sequence is that of ATP synthase subunit alpha from Prochlorococcus marinus (strain NATL2A).